A 341-amino-acid polypeptide reads, in one-letter code: tRNA N6-adenosine threonylcarbamoyltransferase (341 aa).

2 residues coordinate Fe cation: histidine 113 and histidine 117. Residues 136–140 (IISGG), aspartate 169, glycine 182, and asparagine 280 contribute to the substrate site. Aspartate 308 is a binding site for Fe cation.

This sequence belongs to the KAE1 / TsaD family. The cofactor is Fe(2+).

Its subcellular location is the cytoplasm. The enzyme catalyses L-threonylcarbamoyladenylate + adenosine(37) in tRNA = N(6)-L-threonylcarbamoyladenosine(37) in tRNA + AMP + H(+). Required for the formation of a threonylcarbamoyl group on adenosine at position 37 (t(6)A37) in tRNAs that read codons beginning with adenine. Is involved in the transfer of the threonylcarbamoyl moiety of threonylcarbamoyl-AMP (TC-AMP) to the N6 group of A37, together with TsaE and TsaB. TsaD likely plays a direct catalytic role in this reaction. The polypeptide is tRNA N6-adenosine threonylcarbamoyltransferase (Anaplasma marginale (strain St. Maries)).